The sequence spans 313 residues: Probable cytochrome c oxidase subunit 2 (313 aa).

Residues 5–51 enclose the RPE1 insert domain; the sequence is RYWSKQSYKKLKVDQEHNTTEYTNVCNSTSLGSTYTLPLKMELWKIY. Transmembrane regions (helical) follow at residues 39–59, 94–114, and 131–151; these read YTLPLKMELWKIYITLIYFLI, LLYIGTAIVLFVAGLLGFVCI, and LLIEIIWTVIPIIILVIIAVP. His-233, Cys-268, Cys-272, and His-276 together coordinate Cu cation.

It belongs to the cytochrome c oxidase subunit 2 family. It depends on Cu cation as a cofactor. Heme serves as cofactor.

The protein localises to the cell membrane. The catalysed reaction is 4 Fe(II)-[cytochrome c] + O2 + 8 H(+)(in) = 4 Fe(III)-[cytochrome c] + 2 H2O + 4 H(+)(out). Subunits I and II form the functional core of the enzyme complex. Electrons originating in cytochrome c are transferred via heme a and Cu(A) to the binuclear center formed by heme a3 and Cu(B). The polypeptide is Probable cytochrome c oxidase subunit 2 (ctaC) (Rickettsia prowazekii (strain Madrid E)).